Reading from the N-terminus, the 266-residue chain is NADP-dependent mannitol dehydrogenase (266 aa).

NADP(+) contacts are provided by S53, N107, and K140. Residue S159 is the Proton donor of the active site. Residues Y174, K178, I206, and T208 each coordinate NADP(+). The active-site Proton acceptor is Y174. K178 acts as the Lowers pKa of active site Tyr in catalysis.

Belongs to the short-chain dehydrogenases/reductases (SDR) family. Homotetramer.

The enzyme catalyses D-mannitol + NADP(+) = D-fructose + NADPH + H(+). Its function is as follows. D-mannitol 2-dehydrogenase which is not necessary for D-mannitol catabolism. D-mannitol metabolism occurs via at least two different routes involving mannitol dehydrogenase (MDH) or mannitol 1-phosphate dehydrogenase, and the exact physiological role of mannitol dehydrogenases remains unclear. This chain is NADP-dependent mannitol dehydrogenase, found in Hypocrea jecorina (strain ATCC 56765 / BCRC 32924 / NRRL 11460 / Rut C-30) (Trichoderma reesei).